The primary structure comprises 34 residues: MNDQMFVETLIITSSFFAIAVVLVLSVLLIERIG.

The helical transmembrane segment at 10-30 threads the bilayer; the sequence is LIITSSFFAIAVVLVLSVLLI.

It localises to the membrane. This is an uncharacterized protein from Shigella flexneri.